Consider the following 216-residue polypeptide: MOB kinase activator 3B (216 aa).

Residues Cys-82, Cys-87, His-164, and His-169 each contribute to the Zn(2+) site.

Belongs to the MOB1/phocein family.

In terms of biological role, modulates LATS1 expression in the Hippo signaling pathway which plays a pivotal role in organ size control and tumor suppression by restricting proliferation and promoting apoptosis. This is MOB kinase activator 3B from Homo sapiens (Human).